The following is a 290-amino-acid chain: Tegument protein VP22 (290 aa).

Over residues 98–112 (STSHGRLSPTKTTPH) the composition is skewed to polar residues. The segment at 98-156 (STSHGRLSPTKTTPHPKSAGVTPPQRVPARPATRAAAPSATPTQPDCVAKQRTSPGVNS) is disordered. The segment covering 118–142 (VTPPQRVPARPATRAAAPSATPTQP) has biased composition (low complexity). Residues 146-149 (AKQR) carry the Nuclear localization signal motif. A Nuclear export signal motif is present at residues 219-231 (LDRFLKAAAIRIL).

It belongs to the alphaherpesvirinae VP22 tegument protein family. Interacts with gE (via C-terminus); this interaction is necessary for the recruitment of VP22 to the Golgi and its packaging into virions. Interacts with gM (via C-terminus). Interacts with VP16; this interaction allows the formation of a tripartite complex composed of VP16, VP22 and UL41/VHS. Interacts with the capsid-binding protein UL16. Interacts with host CGAS. Post-translationally, highly phosphorylated in the host cell. Packaging is selective for underphosphorylated forms.

The protein resides in the virion tegument. It is found in the host cytoplasm. Its subcellular location is the host nucleus. It localises to the host Golgi apparatus. Functionally, tegument protein that plays different roles during the time course of infection. Participates in both the accumulation of viral mRNAs and viral protein translation at late time of infection. Modulates the RNase activity of the virion host shutoff protein UL41 probably to ensure necessary levels of key cellular mRNAs and proteins. Plays a role in microtubule reorganization that occurs after viral infection by stabilizing microtubule network. Plays a role in the inhibition of host innate immune system by targeting the CGAS enzymatic activity which is the principal cytosolic DNA sensor that detects invading viral DNA. Acts by mediating disruption of liquid-like droplets in which CGAS is activated, thereby preventing CGAS activity. The sequence is that of Tegument protein VP22 (11) from Equus caballus (Horse).